Consider the following 379-residue polypeptide: Glucose-1-phosphate adenylyltransferase (379 aa).

Alpha-D-glucose 1-phosphate contacts are provided by residues Gly-164, 179 to 180 (EK), and Ser-190.

The protein belongs to the bacterial/plant glucose-1-phosphate adenylyltransferase family. In terms of assembly, homotetramer.

It carries out the reaction alpha-D-glucose 1-phosphate + ATP + H(+) = ADP-alpha-D-glucose + diphosphate. It functions in the pathway glycan biosynthesis; glycogen biosynthesis. In terms of biological role, involved in the biosynthesis of ADP-glucose, a building block required for the elongation reactions to produce glycogen. Catalyzes the reaction between ATP and alpha-D-glucose 1-phosphate (G1P) to produce pyrophosphate and ADP-Glc. This chain is Glucose-1-phosphate adenylyltransferase, found in Streptococcus agalactiae serotype III (strain NEM316).